We begin with the raw amino-acid sequence, 1056 residues long: Sucrose-phosphate synthase (1056 aa).

Over residues 112 to 123 the composition is skewed to basic and acidic residues; the sequence is HVERERGRREAT. The segment at 112-132 is disordered; sequence HVERERGRREATADMSEDLSE. Phosphoserine is present on residues Ser158 and Ser424. Residues 681-700 are disordered; that stretch reads NWQRIDEGSENSDTDSAGDS.

The protein belongs to the glycosyltransferase 1 family. As to quaternary structure, homodimer or homotetramer. Post-translationally, phosphorylated at Ser-158 and Ser-424.

It catalyses the reaction beta-D-fructose 6-phosphate + UDP-alpha-D-glucose = sucrose 6(F)-phosphate + UDP + H(+). It participates in glycan biosynthesis; sucrose biosynthesis; sucrose from D-fructose 6-phosphate and UDP-alpha-D-glucose: step 1/2. Activity is regulated by phosphorylation and moderated by concentration of metabolites and light. In terms of biological role, plays a role in photosynthetic sucrose synthesis by catalyzing the rate-limiting step of sucrose biosynthesis from UDP-glucose and fructose- 6-phosphate. Involved in the regulation of carbon partitioning in the leaves of plants. May regulate the synthesis of sucrose and therefore play a major role as a limiting factor in the export of photoassimilates out of the leaf. Plays a role for sucrose availability that is essential for plant growth and fiber elongation. The protein is Sucrose-phosphate synthase (SPS1) of Spinacia oleracea (Spinach).